We begin with the raw amino-acid sequence, 673 residues long: MADRPEPSSTQQSLVVPDAGVSANADSNRSLPRKDTDNTTQTLEELARQNVAPFLAKYQPRQYAPLRSQVSAPSERHMVNAGYCYRHQPDSKCSRRQADEQSMTQLQSELNLLPQSDQQGIAHVWSLFSAAPAKQRTLMLQGILAQSCFPQLSYISASVRELIRIDFLAALPPELSFKILRYLDTASLCRAAQVSPRWRALADDDVVWHRMCEQHIRRKCNKCGWGLPLLDRKRLREAKREIELRATNWGNNKPAVGSSEAAMVESCSTVQPPASGKRTLESDEEAAALAKRHCASSPQSPEVDESYFKTRYRPWKEVYRDRFVVGMNWKHKRCSIKVFKGHRDSVMCLQFEDNILMTGSYDATVKIWDTDTGEELRTLKGHVAGVRCLQFDDTKLITGSLDRSIRVWNWRTGECISKYNGHAEAVIALHFDCTLLASASVDRTVKIWNFKDKSTFVLPHPQGVNAVKIDSVSRTVLTACDDGAARLWDLDTKTCIRVFHNHIGAVQQVIALPREIELENHLADCENDHVGTSSQGGDNILSTLSPLLEATSPSHPNSPFGSSFDQDQDRIESPRYILTSGVDTTIRLWETSTGRCLRTFFGHLEGIWALSADTLRIASGGMDRMVKIWDPRIPTGQDTYEGHSAAVNCIGLSDSRFITGGDDYQVRMYDFRA.

The tract at residues 1-39 (MADRPEPSSTQQSLVVPDAGVSANADSNRSLPRKDTDNT) is disordered. Positions 165–211 (IDFLAALPPELSFKILRYLDTASLCRAAQVSPRWRALADDDVVWHRM) constitute an F-box domain. WD repeat units follow at residues 341–378 (GHRDSVMCLQFEDNILMTGSYDATVKIWDTDTGEELRT), 381–420 (GHVAGVRCLQFDDTKLITGSLDRSIRVWNWRTGECISKYN), 422–458 (HAEAVIALHFDCTLLASASVDRTVKIWNFKDKSTFVL), 460–500 (HPQG…RVFH), 554–599 (SHPN…CLRT), 602–639 (GHLEGIWALSADTLRIASGGMDRMVKIWDPRIPTGQDT), and 642–673 (GHSAAVNCIGLSDSRFITGGDDYQVRMYDFRA).

It belongs to the WD repeat MET30/SCONB/SCON-2 family. Component of the SCF(sconB) E3 ubiquitin ligase complex.

It participates in protein modification; protein ubiquitination. Component of the SCF(sconB) E3 ubiquitin ligase complex involved in the regulation of sulfur metabolite repression, probably by mediating the inactivation or degradation of the metR transcription factor. The chain is Probable E3 ubiquitin ligase complex SCF subunit sconB (sconB) from Penicillium rubens (strain ATCC 28089 / DSM 1075 / NRRL 1951 / Wisconsin 54-1255) (Penicillium chrysogenum).